A 196-amino-acid chain; its full sequence is FMN-dependent NADH:quinone oxidoreductase (196 aa).

An FMN-binding site is contributed by S10.

The protein belongs to the azoreductase type 1 family. As to quaternary structure, homodimer. FMN is required as a cofactor.

The enzyme catalyses 2 a quinone + NADH + H(+) = 2 a 1,4-benzosemiquinone + NAD(+). It carries out the reaction N,N-dimethyl-1,4-phenylenediamine + anthranilate + 2 NAD(+) = 2-(4-dimethylaminophenyl)diazenylbenzoate + 2 NADH + 2 H(+). Its function is as follows. Quinone reductase that provides resistance to thiol-specific stress caused by electrophilic quinones. In terms of biological role, also exhibits azoreductase activity. Catalyzes the reductive cleavage of the azo bond in aromatic azo compounds to the corresponding amines. The protein is FMN-dependent NADH:quinone oxidoreductase of Cereibacter sphaeroides (strain ATCC 17029 / ATH 2.4.9) (Rhodobacter sphaeroides).